Here is a 101-residue protein sequence, read N- to C-terminus: Small ribosomal subunit protein uS14 (101 aa).

This sequence belongs to the universal ribosomal protein uS14 family. In terms of assembly, part of the 30S ribosomal subunit. Contacts proteins S3 and S10.

Binds 16S rRNA, required for the assembly of 30S particles and may also be responsible for determining the conformation of the 16S rRNA at the A site. This is Small ribosomal subunit protein uS14 from Protochlamydia amoebophila (strain UWE25).